The chain runs to 310 residues: MTDLPFTLDQLRILKAIASEGSFKKAAESLYISQPAVSLQIQNLEKQLNIPIFDRANRKAVFTEEGDTLLRYGNRVLSLCDETCRAIEDLKTLQGGTLIIGASQTTGTYLMPRLIGLFRHKYPQIAVQLQVHSTRRVAWSVANGQVNLAVVGGKVPDELRSKLQITPYVDDELALILPKLHPFSKLEVIQKEDLYRLRFITLDKQSTIRRVIDTVLNEHGIDSARFKIEMELNSVEAIKNAVQSGLGAAFVSISAIAKELELGLLHWVKIEGVVIKRTLSIITNPSRYQAKASEIFSKEILTLFVTPYEI.

An HTH lysR-type domain is found at 6–63 (FTLDQLRILKAIASEGSFKKAAESLYISQPAVSLQIQNLEKQLNIPIFDRANRKAVFT). Positions 23-42 (FKKAAESLYISQPAVSLQIQ) form a DNA-binding region, H-T-H motif.

This sequence belongs to the LysR transcriptional regulatory family.

It is found in the plastid. The protein localises to the chloroplast. In terms of biological role, trans-acting transcriptional regulator of RuBisCO genes (rbcL and rbcS) expression. The chain is Probable RuBisCO transcriptional regulator (rbcR) from Guillardia theta (Cryptophyte).